The sequence spans 373 residues: Tryptophan--tRNA ligase (373 aa).

Positions 79 to 87 match the 'HIGH' region motif; the sequence is PSGKFHFGH. A 'KMSKS' region motif is present at residues 257 to 261; sequence KMSSS.

It belongs to the class-I aminoacyl-tRNA synthetase family.

It is found in the cytoplasm. The catalysed reaction is tRNA(Trp) + L-tryptophan + ATP = L-tryptophyl-tRNA(Trp) + AMP + diphosphate + H(+). In Hyperthermus butylicus (strain DSM 5456 / JCM 9403 / PLM1-5), this protein is Tryptophan--tRNA ligase.